The sequence spans 81 residues: MAHTVKIYDNCIGCTQCVRACPLDVLEMVPWDGCKAGQMASAPRTEDCVGCKRCETACPTDFLSIRVYLGGETTRSMGLAY.

4Fe-4S ferredoxin-type domains are found at residues 2-31 and 39-68; these read AHTV…MVPW and MASA…IRVY. [4Fe-4S] cluster-binding residues include C11, C14, C17, C21, C48, C51, C54, and C58.

In terms of assembly, the eukaryotic PSI reaction center is composed of at least 11 subunits. The cofactor is [4Fe-4S] cluster.

The protein localises to the plastid. Its subcellular location is the chloroplast thylakoid membrane. The enzyme catalyses reduced [plastocyanin] + hnu + oxidized [2Fe-2S]-[ferredoxin] = oxidized [plastocyanin] + reduced [2Fe-2S]-[ferredoxin]. In terms of biological role, apoprotein for the two 4Fe-4S centers FA and FB of photosystem I (PSI); essential for photochemical activity. FB is the terminal electron acceptor of PSI, donating electrons to ferredoxin. The C-terminus interacts with PsaA/B/D and helps assemble the protein into the PSI complex. Required for binding of PsaD and PsaE to PSI. PSI is a plastocyanin/cytochrome c6-ferredoxin oxidoreductase, converting photonic excitation into a charge separation, which transfers an electron from the donor P700 chlorophyll pair to the spectroscopically characterized acceptors A0, A1, FX, FA and FB in turn. The protein is Photosystem I iron-sulfur center of Cyanidioschyzon merolae (strain NIES-3377 / 10D) (Unicellular red alga).